The primary structure comprises 552 residues: Probable beta-glucosidase btgE (552 aa).

Positions 1–18 (MRGAILATAAALAGTAMA) are cleaved as a signal peptide. Residues 250–291 (EPTSAPAAPSTTAVPATTTAAVPSTSSAAPSSSSTAPASTGA) form a disordered region. Residues 251–289 (PTSAPAAPSTTAVPATTTAAVPSTSSAAPSSSSTAPAST) show a composition bias toward low complexity. The Proton donor role is filled by E392. E488 functions as the Nucleophile in the catalytic mechanism.

This sequence belongs to the glycosyl hydrolase 17 family.

It localises to the secreted. The protein resides in the cell wall. It carries out the reaction Hydrolysis of terminal, non-reducing beta-D-glucosyl residues with release of beta-D-glucose.. The protein operates within glycan metabolism; cellulose degradation. In terms of biological role, beta-glucosidases are one of a number of cellulolytic enzymes involved in the degradation of cellulosic biomass. Catalyzes the last step releasing glucose from the inhibitory cellobiose. This chain is Probable beta-glucosidase btgE (btgE), found in Neosartorya fischeri (strain ATCC 1020 / DSM 3700 / CBS 544.65 / FGSC A1164 / JCM 1740 / NRRL 181 / WB 181) (Aspergillus fischerianus).